Consider the following 102-residue polypeptide: Virulence plasmid protein pGP4-D (102 aa).

This is Virulence plasmid protein pGP4-D from Chlamydia trachomatis serovar L2 (strain ATCC VR-902B / DSM 19102 / 434/Bu).